The following is a 130-amino-acid chain: Zinc finger A20 and AN1 domain-containing stress-associated protein 10 (130 aa).

The A20-type zinc finger occupies 4 to 38; the sequence is ETEALPCEGGCGLYGTRVNNNLCSLCYKKSVLQHS. 12 residues coordinate Zn(2+): cysteine 10, cysteine 14, cysteine 26, cysteine 29, cysteine 71, cysteine 74, cysteine 85, cysteine 87, cysteine 92, histidine 95, histidine 101, and cysteine 103. The AN1-type zinc finger occupies 65–111; it reads PVKKRRCGICKRKVGMLGFKCRCGHMFCGSHRYPEEHSCPFDYKQSG.

Its function is as follows. May be involved in environmental stress response. The sequence is that of Zinc finger A20 and AN1 domain-containing stress-associated protein 10 (SAP10) from Arabidopsis thaliana (Mouse-ear cress).